The chain runs to 348 residues: 4-hydroxy-2-oxovalerate aldolase (348 aa).

The 253-residue stretch at 9 to 261 (ITVHDMTLRD…RTGVDVWKIQ (253 aa)) folds into the Pyruvate carboxyltransferase domain. Residue 17-18 (RD) participates in substrate binding. Asp18 is a binding site for Mn(2+). His21 serves as the catalytic Proton acceptor. Ser171 and His200 together coordinate substrate. Mn(2+) contacts are provided by His200 and His202. Tyr291 is a substrate binding site.

It belongs to the 4-hydroxy-2-oxovalerate aldolase family.

It carries out the reaction (S)-4-hydroxy-2-oxopentanoate = acetaldehyde + pyruvate. The protein is 4-hydroxy-2-oxovalerate aldolase of Ralstonia pickettii (strain 12J).